The following is a 252-amino-acid chain: Delta-like protein dsl-1 (252 aa).

An N-terminal signal peptide occupies residues 1-17; that stretch reads MLKYLIFLAILISVVHS. The DSL domain maps to 120 to 164; the sequence is IKCNRYWHGLHCDHFCNDDFARTINRRCTQNGTLGCLEGFHGPNC. 6 cysteine pairs are disulfide-bonded: cysteine 122–cysteine 131, cysteine 135–cysteine 147, cysteine 155–cysteine 164, cysteine 173–cysteine 181, cysteine 175–cysteine 197, and cysteine 199–cysteine 209. In terms of domain architecture, EGF-like spans 169-210; sequence PADSCKCQNGGKCVSSLENTWAQNGSLICECRLGHFEGKHCE.

In terms of assembly, may interact with lin-12/Notch receptor.

The protein localises to the secreted. Functionally, probable secreted Notch ligand involved in the mediation of Notch signaling. Involved in the lin-12/Notch pathway-mediated signaling of cell fate in vulval precursor cells (VPCs), acting redundantly with lag-2, apx-1 and osm-11. May also be involved in glp-1/Notch signaling. This chain is Delta-like protein dsl-1, found in Caenorhabditis elegans.